Consider the following 101-residue polypeptide: Urease subunit beta (101 aa).

It belongs to the urease beta subunit family. In terms of assembly, heterotrimer of UreA (gamma), UreB (beta) and UreC (alpha) subunits. Three heterotrimers associate to form the active enzyme.

The protein resides in the cytoplasm. It carries out the reaction urea + 2 H2O + H(+) = hydrogencarbonate + 2 NH4(+). Its pathway is nitrogen metabolism; urea degradation; CO(2) and NH(3) from urea (urease route): step 1/1. The protein is Urease subunit beta of Burkholderia mallei (strain NCTC 10247).